We begin with the raw amino-acid sequence, 164 residues long: Transcriptional repressor NrdR (164 aa).

A zinc finger lies at 3–34; it reads CPKCNYHKSSVVDSRQAEDGNTIRRRRECEQC. The 91-residue stretch at 49 to 139 folds into the ATP-cone domain; it reads LLVIKKDGTR…VYKSFKDVDE (91 aa).

The protein belongs to the NrdR family. Zn(2+) serves as cofactor.

Its function is as follows. Negatively regulates transcription of bacterial ribonucleotide reductase nrd genes and operons by binding to NrdR-boxes. In Streptococcus pyogenes serotype M5 (strain Manfredo), this protein is Transcriptional repressor NrdR.